A 233-amino-acid polypeptide reads, in one-letter code: Putative cobalt transport protein CbiM (233 aa).

The next 6 membrane-spanning stretches (helical) occupy residues 9-29 (PPMWCAVWWVLSGIVIAYGIV), 43-63 (PLVAISGAYMFILSSLKMPSV), 75-95 (LGAVLFGVPITAVLAAIVLLF), 107-127 (TLGANDFSMGIVGPAAAVIVY), 138-158 (TVGIFFAALFGDWLTYVTTAV), and 177-197 (IVIYAYTQVPLAIAEGILTVI).

The protein belongs to the CbiM family. Forms an energy-coupling factor (ECF) transporter complex composed of an ATP-binding protein (A component, CbiO), a transmembrane protein (T component, CbiQ) and 2 possible substrate-capture proteins (S components, CbiM and CbiN) of unknown stoichimetry.

It localises to the cell membrane. The protein operates within cofactor biosynthesis; adenosylcobalamin biosynthesis. Functionally, part of the energy-coupling factor (ECF) transporter complex CbiMNOQ involved in cobalt import. This chain is Putative cobalt transport protein CbiM, found in Methanocaldococcus jannaschii (strain ATCC 43067 / DSM 2661 / JAL-1 / JCM 10045 / NBRC 100440) (Methanococcus jannaschii).